The following is a 353-amino-acid chain: Thiamine thiazole synthase 1, chloroplastic (353 aa).

The transit peptide at 1–48 (MATLTSSICSKPKASVFDPHKSSFHGVPIATQARLSPVKSTPVNLAVT) directs the protein to the chloroplast. Residues alanine 97, 117–118 (EQ), glycine 125, and alanine 190 each bind substrate. The residue at position 219 (cysteine 219) is a 2,3-didehydroalanine (Cys). Residues aspartate 221, histidine 236, methionine 288, and 298 to 300 (RMG) contribute to the substrate site.

This sequence belongs to the THI4 family. As to quaternary structure, homooctamer. Fe cation is required as a cofactor. In terms of processing, during the catalytic reaction, a sulfide is transferred from Cys-219 to a reaction intermediate, generating a dehydroalanine residue.

It is found in the plastid. It localises to the chloroplast. It catalyses the reaction [ADP-thiazole synthase]-L-cysteine + glycine + NAD(+) = [ADP-thiazole synthase]-dehydroalanine + ADP-5-ethyl-4-methylthiazole-2-carboxylate + nicotinamide + 3 H2O + 2 H(+). Involved in biosynthesis of the thiamine precursor thiazole. Catalyzes the conversion of NAD and glycine to adenosine diphosphate 5-(2-hydroxyethyl)-4-methylthiazole-2-carboxylic acid (ADT), an adenylated thiazole intermediate. The reaction includes an iron-dependent sulfide transfer from a conserved cysteine residue of the protein to a thiazole intermediate. The enzyme can only undergo a single turnover, which suggests it is a suicide enzyme. May have additional roles in adaptation to various stress conditions and in DNA damage tolerance. The protein is Thiamine thiazole synthase 1, chloroplastic of Vitis vinifera (Grape).